We begin with the raw amino-acid sequence, 360 residues long: RNA demethylase ALKBH5 (360 aa).

Residues 1–53 (MSATYTDLREKLQSLNRDSPKEVRKRKQPASDTEEEDEAGSEPEAEEEEARKV) form a disordered region. Over residues 7–22 (DLREKLQSLNRDSPKE) the composition is skewed to basic and acidic residues. Acidic residues predominate over residues 32 to 48 (DTEEEDEAGSEPEAEEE). Residue Tyr107 is part of the active site. Asn161, Tyr163, His172, His234, and Arg245 together coordinate 2-oxoglutarate. An intrachain disulfide couples Cys198 to Cys235. The tract at residues 261–360 (EMKSLSSSYQ…PVRKVKMRRH (100 aa)) is disordered. The span at 264 to 280 (SLSSSYQPERLQGSNRQ) shows a compositional bias: polar residues. The segment covering 281–290 (HILKPKRSHR) has biased composition (basic residues). 2 stretches are compositionally biased toward basic and acidic residues: residues 291-312 (KADP…ENRR) and 330-340 (YWRRSHDHVDT).

It belongs to the alkB family. As to quaternary structure, monomer. The cofactor is Fe(2+).

It is found in the nucleus speckle. The enzyme catalyses an N(6)-methyladenosine in mRNA + 2-oxoglutarate + O2 = an adenosine in mRNA + formaldehyde + succinate + CO2. Dioxygenase that specifically demethylates N(6)-methyladenosine (m6A) RNA, the most prevalent internal modification of messenger RNA (mRNA) in higher eukaryotes. Demethylates RNA by oxidative demethylation, which requires molecular oxygen, alpha-ketoglutarate and iron. Demethylation of m6A mRNA affects mRNA processing, translation and export. The chain is RNA demethylase ALKBH5 (alkbh5) from Xenopus laevis (African clawed frog).